The chain runs to 313 residues: Fe-S cluster assembly protein dre2 (313 aa).

2 disordered regions span residues 1 to 25 (MSIT…SQKR) and 151 to 187 (GRKK…AQNN). The N-terminal SAM-like domain stretch occupies residues 20 to 145 (NGSQKRNLLL…FEKPVQEAAV (126 aa)). The interval 146–203 (PLKLGGRKKKDKTNGVNGVQNGVATNGASTNGVGMFDPAQNNDDELIDEDALLSDDDL) is linker. The span at 159 to 177 (NGVNGVQNGVATNGASTNG) shows a compositional bias: polar residues. 4 residues coordinate [2Fe-2S] cluster: Cys-213, Cys-225, Cys-228, and Cys-230. The segment at 213-230 (CVPETAKKRRRPCKDCTC) is fe-S binding site A. Residues Cys-276, Cys-279, Cys-287, and Cys-290 each coordinate [4Fe-4S] cluster. 2 short sequence motifs (cx2C motif) span residues 276-279 (CNSC) and 287-290 (CSSC). Residues 276–290 (CNSCSLGDAFRCSSC) form a fe-S binding site B region.

It belongs to the anamorsin family. Monomer. Interacts with tah18. Interacts with mia40. [2Fe-2S] cluster is required as a cofactor. It depends on [4Fe-4S] cluster as a cofactor.

It localises to the cytoplasm. It is found in the mitochondrion intermembrane space. Its function is as follows. Component of the cytosolic iron-sulfur (Fe-S) protein assembly (CIA) machinery required for the maturation of extramitochondrial Fe-S proteins. Part of an electron transfer chain functioning in an early step of cytosolic Fe-S biogenesis, facilitating the de novo assembly of a [4Fe-4S] cluster on the scaffold complex cfd1-nbp35. Electrons are transferred to dre2 from NADPH via the FAD- and FMN-containing protein tah18. Tah18-dre2 are also required for the assembly of the diferric tyrosyl radical cofactor of ribonucleotide reductase (RNR), probably by providing electrons for reduction during radical cofactor maturation in the catalytic small subunit rnr2. The polypeptide is Fe-S cluster assembly protein dre2 (Aspergillus oryzae (strain ATCC 42149 / RIB 40) (Yellow koji mold)).